Reading from the N-terminus, the 232-residue chain is MVKAVVLLSGGLDSATVLAIARQQGYECYALSVSYGQRHGAELAAAKNLARSLGATAHKIIQVDLSTFGGSALIDKEREIPTDGVTPGIPSTYVPARNTIMLSIALAWAEVLGSGDIFIGVNAIDYSGYPDCRPEYIEAFETMANVATKAGIEGTRLAIHAPLMNLSKAEIIKRGGVLGVDYSMTVSCYQADDAGLACGVCDSCRLRRAGFESADVPDVTRYHAGFRQTPAS.

8-18 (LSGGLDSATVL) is a binding site for ATP. Residues C188, C198, C201, and C204 each coordinate Zn(2+).

This sequence belongs to the QueC family. It depends on Zn(2+) as a cofactor.

It carries out the reaction 7-carboxy-7-deazaguanine + NH4(+) + ATP = 7-cyano-7-deazaguanine + ADP + phosphate + H2O + H(+). The protein operates within purine metabolism; 7-cyano-7-deazaguanine biosynthesis. Functionally, catalyzes the ATP-dependent conversion of 7-carboxy-7-deazaguanine (CDG) to 7-cyano-7-deazaguanine (preQ(0)). This is 7-cyano-7-deazaguanine synthase from Nitrosospira multiformis (strain ATCC 25196 / NCIMB 11849 / C 71).